Consider the following 869-residue polypeptide: Eukaryotic translation initiation factor 3 subunit C (869 aa).

Disordered stretches follow at residues 1–92 and 182–242; these read MSRF…KSAK and IKKA…VGKG. The span at 14–55 shows a compositional bias: acidic residues; that stretch reads SSDEEEDLYSDDEEVQEQPEEESSEDDSEEDDDDDDDSDSSS. Positions 185–203 are enriched in basic and acidic residues; sequence ASKEHQKDIDSFRADKDAY. The PCI domain maps to 607–781; it reads FHMHINLELL…SSIIFRKGVE (175 aa). The disordered stretch occupies residues 803–869; sequence NERTLETRTQ…ALGAAVGSRA (67 aa). Over residues 823–843 the composition is skewed to gly residues; that stretch reads GRGGRGGNRGGRGGGRGGRGG.

The protein belongs to the eIF-3 subunit C family. Component of the eukaryotic translation initiation factor 3 (eIF-3) complex.

It is found in the cytoplasm. Functionally, component of the eukaryotic translation initiation factor 3 (eIF-3) complex, which is involved in protein synthesis of a specialized repertoire of mRNAs and, together with other initiation factors, stimulates binding of mRNA and methionyl-tRNAi to the 40S ribosome. The eIF-3 complex specifically targets and initiates translation of a subset of mRNAs involved in cell proliferation. The protein is Eukaryotic translation initiation factor 3 subunit C (nip1) of Botryotinia fuckeliana (strain B05.10) (Noble rot fungus).